The primary structure comprises 424 residues: S-phase kinase-associated protein 2 (424 aa).

Residues 52–73 (PHGLLSNLGHPQSPPRKRVKGK) form a disordered region. Serine 64 bears the Phosphoserine mark. A Nuclear localization signal motif is present at residues 67 to 73 (RKRVKGK). 2 positions are modified to N6-acetyllysine; by p300/EP300: lysine 68 and lysine 71. Serine 75 bears the Phosphoserine mark. An F-box domain is found at 94-140 (GVSWDSLPDELLLGIFSCLCLPELLRVSGVCKRWYRLSLDESLWQSL). LRR repeat units follow at residues 151–176 (VTVRLLSRGVVAFRCPRSFMEQPLGE), 177–204 (SFSSFRVQHMDLSNSVINVSNLHKILSE), 210–234 (NLSLEGLQLSDPIVKTLAQNENLVR), 235–257 (LNLCGCSGFSESAVATLLSSCSR), 258–284 (LDELNLSWCFDFTEKHVQAAVAHLPNT), 286–308 (TQLNLSGYRKNLQKTDLCTIIKR), 309–330 (CPNLIRLDLSDSIMLKNDCFPE), 334–356 (LNYLQHLSLSRCYDIIPDTLLEL), 359–378 (IPTLKTLQVFGIVPEGTLQL), and 380–401 (REALPRLQINCAYFTTIARPTM). Serine 179 bears the Phosphoserine mark.

Part of a SCF(SKP2) complex consisting of CUL1, RBX1, SKP1 and SKP2. Component of a SCF(SKP2)-like complex containing CUL1, SKP1, TRIM21 and SKP2. Interacts directly with CUL1 and SKP1. Interacts with ASB2 which is the substrate-recognition component of a probable ECS E3 ubiquitin-protein ligase complex; ASB2 is likely to bridge the formation of dimeric E3-ubiquitin-protein ligase complexes composed of an ECS complex and an SCF(SKP2) complex. Interacts with CKS1. Interacts with the cyclin-A-CDK2 complex. Interacts with ORC1, phosphorylated CDT1, phosphorylated RBL2, ELF4, phosphorylated RAG2, FOXO1, UBP43, MYC, TOB1, TAL1 and KMT2A/MLL1. Interacts with TRIM21. Interacts with cyclin-E. Interacts with CARM1. Phosphorylated on serine and threonine resudues in response to DNA damage, promoting 'Lys-63'-linked ubiquitination of NBN. In terms of processing, ubiquitinated by the APC/C complex, leading to its degradation by the proteasome. Deubiquitinated by USP13. Post-translationally, acetylation at Lys-68 and Lys-71 increases stability through impairment of APC/C-mediated proteolysis and promotes cytoplasmic retention. Deacetylated by SIRT3.

It localises to the cytoplasm. Its subcellular location is the nucleus. It functions in the pathway protein modification; protein ubiquitination. Substrate recognition component of a SCF (SKP1-CUL1-F-box protein) E3 ubiquitin-protein ligase complex which mediates the ubiquitination and subsequent proteasomal degradation of target proteins involved in cell cycle progression, signal transduction and transcription. Specifically recognizes phosphorylated CDKN1B/p27kip and is involved in regulation of G1/S transition. Degradation of CDKN1B/p27kip also requires CKS1. Recognizes target proteins ORC1, CDT1, RBL2, KMT2A/MLL1, CDK9, RAG2, NBN, FOXO1, UBP43, YTHDF2, and probably MYC, TOB1 and TAL1. Degradation of TAL1 also requires STUB1. Recognizes CDKN1A in association with CCNE1 or CCNE2 and CDK2. Promotes ubiquitination and destruction of CDH1 in a CK1-dependent manner, thereby regulating cell migration. Following phosphorylation in response to DNA damage, mediates 'Lys-63'-linked ubiquitination of NBN, promoting ATM recruitment to DNA damage sites and DNA repair via homologous recombination. Its function is as follows. Through the ubiquitin-mediated proteasomal degradation of viral proteins may have an antiviral activity. In Mus musculus (Mouse), this protein is S-phase kinase-associated protein 2 (Skp2).